The primary structure comprises 180 residues: UPF0227 protein VV2369 (180 aa).

This sequence belongs to the UPF0227 family.

The protein is UPF0227 protein VV2369 of Vibrio vulnificus (strain YJ016).